We begin with the raw amino-acid sequence, 212 residues long: Synaptosomal-associated protein 25 (212 aa).

2 t-SNARE coiled-coil homology domains span residues 26–88 (QGVA…LSGM) and 148–210 (DARE…AHQL).

Belongs to the SNAP-25 family. As to expression, exclusively found in brain and ganglia.

The protein resides in the synapse. It is found in the synaptosome. May play an important role in the synaptic function of specific neuronal systems. Associates with proteins involved in vesicle docking and membrane fusion. This Drosophila melanogaster (Fruit fly) protein is Synaptosomal-associated protein 25 (Snap25).